The primary structure comprises 198 residues: MHYPEPISKLINSFMKLPGIGPKTAQRLAFHTLDMKEDDVVQFAKALVDVKRELTYCSVCGHITENDPCYICEDKQRDRSVICVVEDDKDVIAMEKMREYKGLYHVLHGSISPMDGIGPEDINIPSLIERLKNDEVSELILAMNPNLEGESTAMYISRLVKPIGIKVTRLAQGLSVGGDLEYADEVTLSKAIAGRTEM.

The C4-type zinc-finger motif lies at 57-72 (CSVCGHITENDPCYIC). The Toprim domain occupies 80–175 (SVICVVEDDK…KVTRLAQGLS (96 aa)).

The protein belongs to the RecR family.

May play a role in DNA repair. It seems to be involved in an RecBC-independent recombinational process of DNA repair. It may act with RecF and RecO. The sequence is that of Recombination protein RecR from Staphylococcus aureus (strain MRSA252).